Consider the following 455-residue polypeptide: L-serine dehydratase (455 aa).

The protein belongs to the iron-sulfur dependent L-serine dehydratase family. [4Fe-4S] cluster is required as a cofactor.

The catalysed reaction is L-serine = pyruvate + NH4(+). The protein operates within carbohydrate biosynthesis; gluconeogenesis. In Haemophilus influenzae (strain ATCC 51907 / DSM 11121 / KW20 / Rd), this protein is L-serine dehydratase (sdaA).